We begin with the raw amino-acid sequence, 104 residues long: MRGGMGNMQSMMRQMQKMQKKVTEEQEKLNQTEFTGVAPDDMVKVVFTGDHRMKDIVINPEAIDEDDPDMLQDLIVAAVNDAMNRVDSETNKTMGKYTKGIPGM.

The tract at residues 1 to 35 (MRGGMGNMQSMMRQMQKMQKKVTEEQEKLNQTEFT) is disordered. The span at 8–17 (MQSMMRQMQK) shows a compositional bias: low complexity. Basic and acidic residues predominate over residues 21–30 (KVTEEQEKLN).

This sequence belongs to the YbaB/EbfC family. Homodimer.

It localises to the cytoplasm. The protein localises to the nucleoid. In terms of biological role, binds to DNA and alters its conformation. May be involved in regulation of gene expression, nucleoid organization and DNA protection. In Pediococcus pentosaceus (strain ATCC 25745 / CCUG 21536 / LMG 10740 / 183-1w), this protein is Nucleoid-associated protein PEPE_1483.